A 43-amino-acid polypeptide reads, in one-letter code: Plasma membrane ATPase proteolipid 2 (43 aa).

The propeptide occupies 1–5; that stretch reads MLMST. Residues 9–29 form a helical membrane-spanning segment; sequence GVILVFILVGLACIAIISTII. Residues 30–43 are Cytoplasmic-facing; sequence YRKWQARQRGLQRF.

In terms of assembly, monomer and homodimer. Associated with the 100 kDa subunit of the plasma membrane H(+)-ATPase.

Its subcellular location is the cell membrane. This chain is Plasma membrane ATPase proteolipid 2 (PMP2), found in Saccharomyces cerevisiae (strain ATCC 204508 / S288c) (Baker's yeast).